The chain runs to 542 residues: CTP synthase (542 aa).

The tract at residues 1 to 265 is amidoligase domain; the sequence is MARYVFITGG…DSEVLAAFGI (265 aa). A CTP-binding site is contributed by S13. Position 13 (S13) interacts with UTP. Residue 14 to 19 coordinates ATP; that stretch reads SLGKGI. Y54 lines the L-glutamine pocket. ATP is bound at residue D71. Positions 71 and 139 each coordinate Mg(2+). Residues 146–148, 186–191, and K222 contribute to the CTP site; these read DIE and KTKPTQ. UTP is bound by residues 186-191 and K222; that span reads KTKPTQ. The Glutamine amidotransferase type-1 domain occupies 291 to 541; sequence TIAIVGKYTG…IAAAVEQSRL (251 aa). G353 serves as a coordination point for L-glutamine. The Nucleophile; for glutamine hydrolysis role is filled by C380. Residues 381-384, E404, and R469 each bind L-glutamine; that span reads FGMQ. Catalysis depends on residues H514 and E516.

It belongs to the CTP synthase family. In terms of assembly, homotetramer.

The enzyme catalyses UTP + L-glutamine + ATP + H2O = CTP + L-glutamate + ADP + phosphate + 2 H(+). It carries out the reaction L-glutamine + H2O = L-glutamate + NH4(+). The catalysed reaction is UTP + NH4(+) + ATP = CTP + ADP + phosphate + 2 H(+). The protein operates within pyrimidine metabolism; CTP biosynthesis via de novo pathway; CTP from UDP: step 2/2. Allosterically activated by GTP, when glutamine is the substrate; GTP has no effect on the reaction when ammonia is the substrate. The allosteric effector GTP functions by stabilizing the protein conformation that binds the tetrahedral intermediate(s) formed during glutamine hydrolysis. Inhibited by the product CTP, via allosteric rather than competitive inhibition. Catalyzes the ATP-dependent amination of UTP to CTP with either L-glutamine or ammonia as the source of nitrogen. Regulates intracellular CTP levels through interactions with the four ribonucleotide triphosphates. The polypeptide is CTP synthase (Chelativorans sp. (strain BNC1)).